Consider the following 170-residue polypeptide: Large ribosomal subunit protein uL11 (170 aa).

The protein belongs to the universal ribosomal protein uL11 family. As to quaternary structure, part of the ribosomal stalk of the 50S ribosomal subunit. Interacts with L10 and the large rRNA to form the base of the stalk. L10 forms an elongated spine to which L12 dimers bind in a sequential fashion forming a multimeric L10(L12)X complex.

Its function is as follows. Forms part of the ribosomal stalk which helps the ribosome interact with GTP-bound translation factors. This is Large ribosomal subunit protein uL11 from Saccharolobus islandicus (strain Y.N.15.51 / Yellowstone #2) (Sulfolobus islandicus).